The chain runs to 402 residues: Sensor protein kinase FleS (402 aa).

Positions Ser188–Pro393 constitute a Histidine kinase domain. His191 carries the post-translational modification Phosphohistidine; by autocatalysis.

The catalysed reaction is ATP + protein L-histidine = ADP + protein N-phospho-L-histidine.. Its function is as follows. Member of the two-component regulatory system FleS/FleR that regulates the expression of multiple genes involved in flagellar synthesis, adhesion, swarming, motility and antibiotic resistance. May function as a membrane-associated protein kinase that phosphorylates FleR in response to environmental signals leading to activation of specific gene promoters. The polypeptide is Sensor protein kinase FleS (fleS) (Pseudomonas aeruginosa (strain ATCC 15692 / DSM 22644 / CIP 104116 / JCM 14847 / LMG 12228 / 1C / PRS 101 / PAO1)).